Consider the following 120-residue polypeptide: uncharacterized protein (120 aa).

Residues 8–28 traverse the membrane as a helical segment; it reads LIVKWFVGLMLIMMMVAVSLF.

The protein resides in the membrane. This is an uncharacterized protein from Bacillus anthracis.